The following is a 135-amino-acid chain: Sex-regulated protein janus-A (135 aa).

Lys-37 lines the substrate pocket. His-63 acts as the Proton acceptor in catalysis. 104–106 serves as a coordination point for substrate; that stretch reads SQG.

Belongs to the janus family. In terms of tissue distribution, somatic and germline cells. Isoform B is expressed in both sexes and in somatic and germ line cells. Isoform A is expressed in males and is germ line specific.

JanA and janB regulate somatic sex differentiation. This Drosophila melanogaster (Fruit fly) protein is Sex-regulated protein janus-A (janA).